We begin with the raw amino-acid sequence, 608 residues long: Albumin (608 aa).

Residues 1-18 (MKWVTFLLLLFISGSAFS) form the signal peptide. Residues 19–24 (RGVFRR) constitute a propeptide that is removed on maturation. Albumin domains are found at residues 19–211 (RGVF…AVKE), 212–403 (KALV…EFQP), and 404–601 (LVEE…NLVA). His27 contacts Cu cation. Ser29 is modified (phosphoserine). Residues Glu30 and Asp37 each coordinate Ca(2+). Cysteines 77 and 86 form a disulfide. Phosphoserine is present on Ser89. His91 is a Zn(2+) binding site. 6 cysteine pairs are disulfide-bonded: Cys99–Cys115, Cys114–Cys125, Cys148–Cys193, Cys192–Cys201, Cys224–Cys270, and Cys269–Cys277. Glu268 provides a ligand contact to Ca(2+). Residues His271 and Asp273 each contribute to the Zn(2+) site. Ca(2+) contacts are provided by Asp273, Glu276, and Asp279. Cystine bridges form between Cys289/Cys303, Cys302/Cys313, Cys340/Cys385, Cys384/Cys393, Cys416/Cys462, Cys461/Cys472, Cys485/Cys501, and Cys500/Cys511. A Phosphoserine modification is found at Ser297. Ser443 is modified (phosphoserine). Phosphothreonine occurs at positions 444 and 446. At Lys460 the chain carries N6-succinyllysine. Ser513 carries the post-translational modification Phosphoserine. Intrachain disulfides connect Cys538–Cys583 and Cys582–Cys591. N6-succinyllysine is present on Lys543. Lys558 bears the N6-methyllysine mark. Phosphothreonine is present on Thr570. N6-succinyllysine is present on Lys588.

The protein belongs to the ALB/AFP/VDB family. In terms of assembly, interacts with FCGRT; this interaction regulates ALB homeostasis. Interacts with TASOR. In plasma, occurs in a covalently-linked complex with chromophore-bound alpha-1-microglobulin; this interaction does not prevent fatty acid binding to ALB. In terms of processing, phosphorylated by FAM20C in the extracellular medium. Plasma.

Its subcellular location is the secreted. Binds water, Ca(2+), Na(+), K(+), fatty acids, hormones, bilirubin and drugs. Its main function is the regulation of the colloidal osmotic pressure of blood. Major zinc transporter in plasma, typically binds about 80% of all plasma zinc. Major calcium and magnesium transporter in plasma, binds approximately 45% of circulating calcium and magnesium in plasma. Potentially has more than two calcium-binding sites and might additionally bind calcium in a non-specific manner. The shared binding site between zinc and calcium at residue Asp-273 suggests a crosstalk between zinc and calcium transport in the blood. The rank order of affinity is zinc &gt; calcium &gt; magnesium. Binds to the bacterial siderophore enterobactin and inhibits enterobactin-mediated iron uptake of E.coli from ferric transferrin, and may thereby limit the utilization of iron and growth of enteric bacteria such as E.coli. Does not prevent iron uptake by the bacterial siderophore aerobactin. The sequence is that of Albumin (Alb) from Rattus norvegicus (Rat).